A 330-amino-acid chain; its full sequence is DNA-directed RNA polymerase subunit alpha (330 aa).

Residues 1–235 (MQGSVTEFLK…EQLEAFVDLR (235 aa)) form an alpha N-terminal domain (alpha-NTD) region. Positions 249–330 (FDPILLRPVD…WPPASIADNE (82 aa)) are alpha C-terminal domain (alpha-CTD).

This sequence belongs to the RNA polymerase alpha chain family. In terms of assembly, homodimer. The RNAP catalytic core consists of 2 alpha, 1 beta, 1 beta' and 1 omega subunit. When a sigma factor is associated with the core the holoenzyme is formed, which can initiate transcription.

The catalysed reaction is RNA(n) + a ribonucleoside 5'-triphosphate = RNA(n+1) + diphosphate. In terms of biological role, DNA-dependent RNA polymerase catalyzes the transcription of DNA into RNA using the four ribonucleoside triphosphates as substrates. In Yersinia enterocolitica serotype O:8 / biotype 1B (strain NCTC 13174 / 8081), this protein is DNA-directed RNA polymerase subunit alpha.